Reading from the N-terminus, the 101-residue chain is uncharacterized protein (101 aa).

A compositionally biased stretch (low complexity) spans 65-79 (QEAAAPAGPQEPAEA). Positions 65–101 (QEAAAPAGPQEPAEASGDAGKKEEVEEEEIEIDFGMF) are disordered. Residues 89–101 (VEEEEIEIDFGMF) are compositionally biased toward acidic residues.

This is an uncharacterized protein from Encephalitozoon cuniculi (strain GB-M1) (Microsporidian parasite).